A 138-amino-acid polypeptide reads, in one-letter code: MLIPRRVKHRKQHHPTRRGAASGGTRVTFGDYGIMAVEGGYVTNRQIESARIAITRHIRRGGKVWINIYPDRPLTKKPAETRMGSGKGSPEWWIANIKPGRVMFELSFPTEKIATEALTRAIHKLPVKCKIVRREGGE.

Over residues Met1–Arg17 the composition is skewed to basic residues. The disordered stretch occupies residues Met1–Gly24.

This sequence belongs to the universal ribosomal protein uL16 family. Part of the 50S ribosomal subunit.

In terms of biological role, binds 23S rRNA and is also seen to make contacts with the A and possibly P site tRNAs. This Kineococcus radiotolerans (strain ATCC BAA-149 / DSM 14245 / SRS30216) protein is Large ribosomal subunit protein uL16.